A 320-amino-acid polypeptide reads, in one-letter code: Protein rlx (320 aa).

Functionally, this protein is probably required for relaxation complex formation and plasmid mobilization by conjugative plasmids. The sequence is that of Protein rlx (rlx) from Staphylococcus aureus.